The sequence spans 382 residues: Anhydro-N-acetylmuramic acid kinase (382 aa).

22–29 (GTSMDGVD) provides a ligand contact to ATP.

It belongs to the anhydro-N-acetylmuramic acid kinase family.

The enzyme catalyses 1,6-anhydro-N-acetyl-beta-muramate + ATP + H2O = N-acetyl-D-muramate 6-phosphate + ADP + H(+). It functions in the pathway amino-sugar metabolism; 1,6-anhydro-N-acetylmuramate degradation. The protein operates within cell wall biogenesis; peptidoglycan recycling. Catalyzes the specific phosphorylation of 1,6-anhydro-N-acetylmuramic acid (anhMurNAc) with the simultaneous cleavage of the 1,6-anhydro ring, generating MurNAc-6-P. Is required for the utilization of anhMurNAc either imported from the medium or derived from its own cell wall murein, and thus plays a role in cell wall recycling. The protein is Anhydro-N-acetylmuramic acid kinase of Burkholderia cenocepacia (strain ATCC BAA-245 / DSM 16553 / LMG 16656 / NCTC 13227 / J2315 / CF5610) (Burkholderia cepacia (strain J2315)).